The primary structure comprises 514 residues: Transmembrane protein 117 (514 aa).

At methionine 1 to arginine 15 the chain is on the cytoplasmic side. The helical transmembrane segment at methionine 16–serine 36 threads the bilayer. Residues histidine 37 to arginine 65 are Extracellular-facing. Residues isoleucine 66 to leucine 86 form a helical membrane-spanning segment. Over phenylalanine 87 to threonine 110 the chain is Cytoplasmic. Residues methionine 111–leucine 131 traverse the membrane as a helical segment. Residues methionine 132–lysine 154 are Extracellular-facing. Residues leucine 155–methionine 175 form a helical membrane-spanning segment. Residues leucine 176 to arginine 198 are Cytoplasmic-facing. Residues isoleucine 199 to threonine 219 traverse the membrane as a helical segment. Residues aspartate 220–arginine 239 lie on the Extracellular side of the membrane. A helical membrane pass occupies residues alanine 240 to phenylalanine 260. Topologically, residues proline 261–arginine 295 are cytoplasmic. A helical transmembrane segment spans residues isoleucine 296–leucine 316. Topologically, residues asparagine 317–cysteine 394 are extracellular. 2 N-linked (GlcNAc...) asparagine glycosylation sites follow: asparagine 353 and asparagine 371. Residues leucine 395 to glycine 415 form a helical membrane-spanning segment. At arginine 416–asparagine 514 the chain is on the cytoplasmic side. Disordered stretches follow at residues lysine 429–aspartate 459 and glutamate 486–asparagine 514. The span at serine 438–isoleucine 448 shows a compositional bias: basic and acidic residues. The residue at position 453 (threonine 453) is a Phosphothreonine.

Belongs to the TMEM117 family.

The protein localises to the cell membrane. Functionally, involved in endoplasmic reticulum (ER) stress-induced cell death pathway. This Homo sapiens (Human) protein is Transmembrane protein 117 (TMEM117).